The primary structure comprises 252 residues: Imidazole glycerol phosphate synthase subunit HisF (252 aa).

Residues Asp11 and Asp130 contribute to the active site.

Belongs to the HisA/HisF family. As to quaternary structure, heterodimer of HisH and HisF.

The protein resides in the cytoplasm. The enzyme catalyses 5-[(5-phospho-1-deoxy-D-ribulos-1-ylimino)methylamino]-1-(5-phospho-beta-D-ribosyl)imidazole-4-carboxamide + L-glutamine = D-erythro-1-(imidazol-4-yl)glycerol 3-phosphate + 5-amino-1-(5-phospho-beta-D-ribosyl)imidazole-4-carboxamide + L-glutamate + H(+). It functions in the pathway amino-acid biosynthesis; L-histidine biosynthesis; L-histidine from 5-phospho-alpha-D-ribose 1-diphosphate: step 5/9. IGPS catalyzes the conversion of PRFAR and glutamine to IGP, AICAR and glutamate. The HisF subunit catalyzes the cyclization activity that produces IGP and AICAR from PRFAR using the ammonia provided by the HisH subunit. In Bacillus mycoides (strain KBAB4) (Bacillus weihenstephanensis), this protein is Imidazole glycerol phosphate synthase subunit HisF.